The chain runs to 360 residues: Mannose-1-phosphate guanyltransferase beta-B (360 aa).

The protein belongs to the transferase hexapeptide repeat family.

The catalysed reaction is alpha-D-mannose 1-phosphate + GTP + H(+) = GDP-alpha-D-mannose + diphosphate. It participates in nucleotide-sugar biosynthesis; GDP-alpha-D-mannose biosynthesis; GDP-alpha-D-mannose from alpha-D-mannose 1-phosphate (GTP route): step 1/1. Catalyzes the formation of GDP-mannose, an essential precursor of glycan moieties of glycoproteins and glycolipids. In Xenopus laevis (African clawed frog), this protein is Mannose-1-phosphate guanyltransferase beta-B (gmppb-b).